Reading from the N-terminus, the 256-residue chain is Ribonuclease 3 (256 aa).

Positions 3-125 (LEALQQRLGY…IFGAVFLDGG (123 aa)) constitute an RNase III domain. Glu-38 contacts Mg(2+). Residue Asp-42 is part of the active site. Residues Asp-111 and Glu-114 each coordinate Mg(2+). Glu-114 is a catalytic residue. The DRBM domain occupies 152-222 (DAKTLLQEYL…AKLALEEAHR (71 aa)). The tract at residues 227–256 (LVKRSRAERTGKTRKQATPPDPQLSLRLKE) is disordered.

Belongs to the ribonuclease III family. In terms of assembly, homodimer. Mg(2+) serves as cofactor.

Its subcellular location is the cytoplasm. The enzyme catalyses Endonucleolytic cleavage to 5'-phosphomonoester.. Functionally, digests double-stranded RNA. Involved in the processing of primary rRNA transcript to yield the immediate precursors to the large and small rRNAs (23S and 16S). Processes some mRNAs, and tRNAs when they are encoded in the rRNA operon. Processes pre-crRNA and tracrRNA of type II CRISPR loci if present in the organism. This Ralstonia nicotianae (strain ATCC BAA-1114 / GMI1000) (Ralstonia solanacearum) protein is Ribonuclease 3.